The primary structure comprises 533 residues: Zinc finger protein 26 (533 aa).

The region spanning 14–85 (LSFKDISMEF…NAKISRQSCP (72 aa)) is the KRAB domain. C2H2-type zinc fingers lie at residues 174–196 (CVCSECGKAFRCKSQLIVHLRIH), 202–224 (YECSKCERAFSAKSNLNAHQRVH), 230–252 (YSCSECEKVFSFRSQLIVHQEIH), 258–280 (YGCSECGKAYSWKSQLLLHQRSH), 286–308 (YECSECGKAFSLKSPFVVHQRTH), 314–336 (HKCSECGKAFRSKSYLLVHIRMH), 342–364 (YQCSDCGKAFNMKTQLIVHQGVH), 370–392 (YQCGECGKAFGRKEQLTAHLRAH), 398–420 (YGCSECGKAFSSKSYLVIHRRTH), 426–448 (YECSLCERAFCGKSQLIIHQRTH), 454–476 (YECNECEKAYPRKASLQIHQKTH), 482–504 (FKCSECGKAFTQKSSLSEHQRVH), and 510–532 (WKCSECGKSFCWNSGLRIHRKTH).

The protein belongs to the krueppel C2H2-type zinc-finger protein family.

The protein resides in the nucleus. May be involved in transcriptional regulation. The protein is Zinc finger protein 26 (ZNF26) of Homo sapiens (Human).